The chain runs to 338 residues: Ornithine carbamoyltransferase (338 aa).

Residues Ser-56 to Thr-59, Gln-83, Arg-107, and His-134 to Gln-137 contribute to the carbamoyl phosphate site. L-ornithine is bound by residues Asn-168, Asp-232, and Ser-236 to Met-237. Residues Cys-274 to Leu-275 and Arg-320 contribute to the carbamoyl phosphate site.

This sequence belongs to the aspartate/ornithine carbamoyltransferase superfamily. OTCase family.

It localises to the cytoplasm. It carries out the reaction carbamoyl phosphate + L-ornithine = L-citrulline + phosphate + H(+). It participates in amino-acid biosynthesis; L-arginine biosynthesis; L-arginine from L-ornithine and carbamoyl phosphate: step 1/3. Reversibly catalyzes the transfer of the carbamoyl group from carbamoyl phosphate (CP) to the N(epsilon) atom of ornithine (ORN) to produce L-citrulline. The chain is Ornithine carbamoyltransferase from Photorhabdus laumondii subsp. laumondii (strain DSM 15139 / CIP 105565 / TT01) (Photorhabdus luminescens subsp. laumondii).